Reading from the N-terminus, the 210-residue chain is Protein GrpE (210 aa).

The interval 1–42 (MANEERTIPETNVASERPEDPVESQTRAEGGEQIQEAAPETA) is disordered.

This sequence belongs to the GrpE family. As to quaternary structure, homodimer.

The protein resides in the cytoplasm. Participates actively in the response to hyperosmotic and heat shock by preventing the aggregation of stress-denatured proteins, in association with DnaK and GrpE. It is the nucleotide exchange factor for DnaK and may function as a thermosensor. Unfolded proteins bind initially to DnaJ; upon interaction with the DnaJ-bound protein, DnaK hydrolyzes its bound ATP, resulting in the formation of a stable complex. GrpE releases ADP from DnaK; ATP binding to DnaK triggers the release of the substrate protein, thus completing the reaction cycle. Several rounds of ATP-dependent interactions between DnaJ, DnaK and GrpE are required for fully efficient folding. The sequence is that of Protein GrpE from Nitrosococcus oceani (strain ATCC 19707 / BCRC 17464 / JCM 30415 / NCIMB 11848 / C-107).